The primary structure comprises 1395 residues: MNLDEFSDFNIDQLLGPSAPLQDALVAPYKQVSLPRSNQDVYAKRSRLAERIAQNDELIRQVKQLQAQNKQLADLQRTAQEVTDLYQKEKQQRIELEKRTKQIGERCGQLEKELDVQVGNCENLQEQLQVRGLPVEAKDVLSILMQFSQRLGDDCGLLRRDQNIMKKLREHCKTIDVSVPTPKSPNSRSKRKAHQPGVNQSTQTDEEPADPKPALCSVAVQVEGLIETRNQATQHKNTTTTRGTTTASFIKHHDVGTCFPEPKPLPNIRQILDEMLSWRDDVVIEPMSPLSDLQQELQLEDVPTNASVATCTTLCDIHREIDFVTDLPTQIKVSASRPPSRTMLDSVKEEARSSRELAKELFNFLPQNQSCLTNLPPQAFEELWQVFGQMVLALLQRRSNPSMATPPSVSQADFTRWLYELYEGTENQTEQTSNGSTSKRDFATSTECMDTGTDPIIQSPNISHEGHVTPIRLPSKPKERKRKSKKRKAAATPKPIAKRKCLEMETNNELEVEREQTPETAIQFLSNLETFNMANCDNLEMELDEEELYLLQLTSNAKQNENKGNVRVQDPDDLKSPAQTSKFPKSENHLPAVLKETASSLKGYDEKQCPFPDKTEELMHKKTFEIQENIGSLTELPPNIDISAYPVSMAEVRIVSSNKPSEMEVNASEGTDSHLDKSVSNLDTGSMSLFGSDSDVESEYSIEQMAPELSDSDDTFDNSEEDCRSADEPSNSKKIRNSSLFGSESESDESEERALEADDLTEAEAKVEEKESEQKSSDVAPAASSGKLLVVEADLVTKTQPLFVEKLDLENTQHTSTCTNPKETDESEDEHGLVIDEQIFISQPEEPPLTVPIAAKRRRTQSELKTLSPPGEVRLTRQRAKQLLDEQKSGPEKGLSLVEQIRRQLKKAINKSEPFKKDSTHDSKKDSTHDLKPLEHEDELKAMQLGTNFEPIKLSCSISEESPASPPACEPMDELDPPPIEIPLEQAACTRKDDQHKSIVQHVLKMDTGLEKLVEANRKTLGKSQPQLCASIGKYLQENMQLESTCSDLAMDIYKVTKSEAVIVNAMITVICKIGLDDGPVERLLNALKYLNFSQRFLAELEERLFRNTKERPATELALNYVRLYLKATALQATMSAGYENPARLLLAKILYHFDQDMPPLVMEVLRQFPTALPHREQREYDNSDALITVIKHLLMNRQYDMQDPNGAERLLLSKLRFEYHFQPYEPSKQQVLENLVGKLKAGREEELGYAFALFCRRSPHLKVVESVVGEHLMPLATSYCDLAAQNELYDARLGLLLHCISLVLKPLPLDTDISAFVGFLKRLLVAVPRSGVQLAAVKASLRLQRFGFKYTLDALKDYRPNYELDPLTRAMIRCFAKRRRHFRHVAATGRRTEI.

7 disordered regions span residues 175 to 212 (IDVS…ADPK), 452 to 496 (GTDP…PKPI), 561 to 588 (ENKG…KSEN), 658 to 680 (NKPS…KSVS), 707 to 786 (PELS…ASSG), 841 to 872 (ISQP…PPGE), and 908 to 936 (AINK…PLEH). Over residues 478–489 (KERKRKSKKRKA) the composition is skewed to basic residues. Residues 710–720 (SDSDDTFDNSE) are compositionally biased toward acidic residues. A compositionally biased stretch (basic and acidic residues) spans 721–731 (EDCRSADEPSN). Positions 745-762 (SESDESEERALEADDLTE) are enriched in acidic residues. A coiled-coil region spans residues 748 to 778 (DESEERALEADDLTEAEAKVEEKESEQKSSD). Basic and acidic residues predominate over residues 763–776 (AEAKVEEKESEQKS). Basic and acidic residues predominate over residues 913-936 (EPFKKDSTHDSKKDSTHDLKPLEH).

Belongs to the ICE1 family. In terms of assembly, component of the little elongation complex (LEC), at least composed of Ell, Eaf, Ice1 and Ice2.

Its subcellular location is the nucleus. Component of the little elongation complex (LEC), a complex required to regulate small nuclear RNA (snRNA) gene transcription by RNA polymerase II and III. Specifically acts as a scaffold protein that promotes the LEC complex formation and recruitment and RNA polymerase II occupancy at snRNA genes in subnuclear bodies. The sequence is that of Little elongation complex subunit 1 (Ice1) from Drosophila melanogaster (Fruit fly).